The sequence spans 718 residues: SANT and BTB domain regulator of class switch recombination (718 aa).

In terms of domain architecture, SANT spans Asp21–Lys59. The BTB domain maps to Met147–Met255. Over residues Ser555 to Glu576 the composition is skewed to acidic residues. Disordered regions lie at residues Ser555 to Val622 and Arg690 to Ala718. Basic residues predominate over residues Lys580–Lys595. Over residues Gln604 to Ser615 the composition is skewed to basic and acidic residues.

Belongs to the KIAA1841 family. Homodimer. Interacts (via the BTB domain) with HDAC1 and NCOR2.

Negatively regulates class switch recombination or isotype switching in splenic B-cells. The chain is SANT and BTB domain regulator of class switch recombination from Mus musculus (Mouse).